Consider the following 103-residue polypeptide: c-Myc-binding protein (103 aa).

This sequence belongs to the AMY1 family. Binds via its C-terminal region to the N-terminal region of MYC. Associates with AKAP1/S-AKAP84. Interacts with MYCBPAP. Interacts with CFAP91.

It localises to the cytoplasm. Its subcellular location is the nucleus. May control the transcriptional activity of MYC. Stimulates the activation of E box-dependent transcription by MYC. The chain is c-Myc-binding protein (Mycbp) from Mus musculus (Mouse).